The primary structure comprises 152 residues: Small ribosomal subunit protein uS15 (152 aa).

Belongs to the universal ribosomal protein uS15 family. In terms of assembly, part of the 30S ribosomal subunit.

This chain is Small ribosomal subunit protein uS15, found in Saccharolobus solfataricus (strain ATCC 35092 / DSM 1617 / JCM 11322 / P2) (Sulfolobus solfataricus).